We begin with the raw amino-acid sequence, 202 residues long: Probable molybdenum cofactor guanylyltransferase (202 aa).

GTP contacts are provided by residues Leu13–Gly15, Lys25, Asp71, and Asp103. Asp103 contributes to the Mg(2+) binding site.

Belongs to the MobA family. The cofactor is Mg(2+).

The protein resides in the cytoplasm. It catalyses the reaction Mo-molybdopterin + GTP + H(+) = Mo-molybdopterin guanine dinucleotide + diphosphate. Functionally, transfers a GMP moiety from GTP to Mo-molybdopterin (Mo-MPT) cofactor (Moco or molybdenum cofactor) to form Mo-molybdopterin guanine dinucleotide (Mo-MGD) cofactor. The polypeptide is Probable molybdenum cofactor guanylyltransferase (Opitutus terrae (strain DSM 11246 / JCM 15787 / PB90-1)).